A 67-amino-acid polypeptide reads, in one-letter code: Large ribosomal subunit protein bL35 (67 aa).

The protein belongs to the bacterial ribosomal protein bL35 family.

The protein is Large ribosomal subunit protein bL35 of Leptothrix cholodnii (strain ATCC 51168 / LMG 8142 / SP-6) (Leptothrix discophora (strain SP-6)).